The following is a 262-amino-acid chain: Snake venom serine proteinase 9 (262 aa).

Positions 1–18 (MVLIRVLANLLILQLSYA) are cleaved as a signal peptide. Positions 19–24 (QKSSEL) are excised as a propeptide. The Peptidase S1 domain maps to 25 to 253 (VIGGDECNID…HLDWIQSIIA (229 aa)). 5 cysteine pairs are disulfide-bonded: C31-C165, C52-C68, C144-C214, C176-C193, and C204-C229. The active-site Charge relay system is H67. N105 carries an N-linked (GlcNAc...) asparagine glycan. Catalysis depends on D112, which acts as the Charge relay system. S208 acts as the Charge relay system in catalysis.

It belongs to the peptidase S1 family. Snake venom subfamily. As to quaternary structure, monomer. Expressed by the venom gland.

It is found in the secreted. Snake venom serine protease that may act in the hemostasis system of the prey. This chain is Snake venom serine proteinase 9, found in Crotalus adamanteus (Eastern diamondback rattlesnake).